The following is a 252-amino-acid chain: Two-component response regulator ORR2 (252 aa).

The Response regulatory domain maps to 7–157; that stretch reads RVLVVDDSPV…DVQRLRKCSG (151 aa). A 4-aspartylphosphate modification is found at aspartate 90.

The protein belongs to the ARR family. Type-A subfamily. Two-component system major event consists of a His-to-Asp phosphorelay between a sensor histidine kinase (HK) and a response regulator (RR). In plants, the His-to-Asp phosphorelay involves an additional intermediate named Histidine-containing phosphotransfer protein (HPt). This multistep phosphorelay consists of a His-Asp-His-Asp sequential transfer of a phosphate group between first a His and an Asp of the HK protein, followed by the transfer to a conserved His of the HPt protein and finally the transfer to an Asp in the receiver domain of the RR protein. In terms of tissue distribution, expressed in mature leaves and flowers, and at low levels in roots and shoots.

Functions as a response regulator involved in His-to-Asp phosphorelay signal transduction system. Phosphorylation of the Asp residue in the receiver domain activates the ability of the protein to promote the transcription of target genes. Type-A response regulators seem to act as negative regulators of the cytokinin signaling. In Oryza sativa subsp. indica (Rice), this protein is Two-component response regulator ORR2.